The following is a 374-amino-acid chain: All-trans-retinol dehydrogenase [NAD(+)] ADH7 (374 aa).

Residues C47, H68, C98, C101, C104, C112, and C174 each contribute to the Zn(2+) site. Residues 199 to 204 (GLGGVG), D223, K228, 292 to 294 (VGA), and R369 each bind NAD(+).

The protein belongs to the zinc-containing alcohol dehydrogenase family. Class-IV subfamily. In terms of assembly, homodimer. Zn(2+) serves as cofactor. In terms of tissue distribution, high expression in the stomach mucosa. Lower expression in eye, thymus, skin and ovary. Very low expression in small intestine, liver and uterus.

It is found in the cytoplasm. It catalyses the reaction a primary alcohol + NAD(+) = an aldehyde + NADH + H(+). The catalysed reaction is 10-hydroxydecanoate + NAD(+) = 10-oxodecanoate + NADH + H(+). It carries out the reaction all-trans-retinol + NAD(+) = all-trans-retinal + NADH + H(+). The enzyme catalyses 9-cis-retinol + NAD(+) = 9-cis-retinal + NADH + H(+). It catalyses the reaction all-trans-3,4-didehydroretinol + NAD(+) = all-trans-3,4-didehydroretinal + NADH + H(+). The catalysed reaction is all-trans-4-hydroxyretinol + NAD(+) = all-trans-4-hydroxyretinal + NADH + H(+). It carries out the reaction all-trans-4-oxoretinol + NAD(+) = all-trans-4-oxoretinal + NADH + H(+). The enzyme catalyses 12-hydroxydodecanoate + NAD(+) = 12-oxododecanoate + NADH + H(+). It catalyses the reaction 16-hydroxyhexadecanoate + NAD(+) = 16-oxohexadecanoate + NADH + H(+). The catalysed reaction is hexan-1-ol + NAD(+) = hexanal + NADH + H(+). It carries out the reaction (E)-hex-2-en-1-ol + NAD(+) = (E)-hex-2-enal + NADH + H(+). The enzyme catalyses (E)-4-hydroxynon-2-en-1-ol + NAD(+) = (E)-4-hydroxynon-2-enal + NADH + H(+). Its activity is regulated as follows. Retinol oxidation is inhibited by the detergent Tween 80. Ethanol inhibits both all-trans-retinol and 9-cis-retinol oxidation. 13-cis-retinol is an effective competitive inhibitor of the 9-cis-retinol oxidation. All-trans-retinoic acid is a powerful inhibitor of all-trans-retinol oxidation. 13-cis-retinoic acid is a powerful inhibitor of all-trans-retinol oxidation. Cimetidine competitively inhibited ethanol oxidation. Catalyzes the NAD-dependent oxidation of all-trans-retinol, alcohol, aldehyde and omega-hydroxy fatty acids and their derivatives. Oxidizes preferentially all trans-retinol, all-trans-4-hydroxyretinol, 9-cis-retinol, 2-hexenol, and long chain omega-hydroxy fatty acids such as juniperic acid. In vitro can also catalyze the NADH-dependent reduction of all-trans-retinal and aldehydes and their derivatives. Reduces preferentially all trans-retinal, all-trans-4-oxoretinal and hexanal. Catalyzes in the oxidative direction with higher efficiency. Therefore may participate in retinoid metabolism, fatty acid omega-oxidation, and elimination of cytotoxic aldehydes produced by lipid peroxidation. This is All-trans-retinol dehydrogenase [NAD(+)] ADH7 (Adh7) from Mus musculus (Mouse).